Consider the following 322-residue polypeptide: HPr kinase/phosphorylase (322 aa).

Active-site residues include His-146 and Lys-167. 161-168 (GDSGLGKS) serves as a coordination point for ATP. Ser-168 is a Mg(2+) binding site. Residue Asp-185 is the Proton acceptor; for phosphorylation activity. Proton donor; for dephosphorylation activity of the active site. The tract at residues 209–218 (LEVRGLGLLD) is important for the catalytic mechanism of both phosphorylation and dephosphorylation. Glu-210 contributes to the Mg(2+) binding site. Residue Arg-250 is part of the active site. The important for the catalytic mechanism of dephosphorylation stretch occupies residues 271 to 276 (QVAAGR).

Belongs to the HPrK/P family. As to quaternary structure, homohexamer. Requires Mg(2+) as cofactor.

The catalysed reaction is [HPr protein]-L-serine + ATP = [HPr protein]-O-phospho-L-serine + ADP + H(+). The enzyme catalyses [HPr protein]-O-phospho-L-serine + phosphate + H(+) = [HPr protein]-L-serine + diphosphate. Functionally, catalyzes the ATP- as well as the pyrophosphate-dependent phosphorylation of a specific serine residue in HPr, a phosphocarrier protein of the phosphoenolpyruvate-dependent sugar phosphotransferase system (PTS). HprK/P also catalyzes the pyrophosphate-producing, inorganic phosphate-dependent dephosphorylation (phosphorolysis) of seryl-phosphorylated HPr (P-Ser-HPr). The protein is HPr kinase/phosphorylase of Burkholderia multivorans (strain ATCC 17616 / 249).